The chain runs to 143 residues: Large ribosomal subunit protein uL16c (143 aa).

It belongs to the universal ribosomal protein uL16 family. In terms of assembly, part of the 50S ribosomal subunit.

The protein resides in the plastid. The protein localises to the chloroplast. This is Large ribosomal subunit protein uL16c from Marchantia polymorpha (Common liverwort).